The primary structure comprises 588 residues: Adenylate kinase 5, chloroplastic (588 aa).

The disordered stretch occupies residues 1-34 (MASLSLSSAHFSSTSSSSRSSISTSSLSPSSTSL). A chloroplast-targeting transit peptide spans 1 to 73 (MASLSLSSAH…SFSTSNSQIR (73 aa)). Residue 89-94 (ASGKGT) coordinates ATP. An NMP region spans residues 109–138 (STGDLLRAEVSSGTDIGKRAKEFMNSGSLV). AMP contacts are provided by residues R115, 136 to 138 (SLV), 165 to 168 (GFPR), and Q172. An LID region spans residues 202-235 (GRRLDPVTGKIYHIKNYPPESDEIKARLVTRPDD). ATP is bound at residue R203. 2 residues coordinate AMP: R232 and R243.

Belongs to the adenylate kinase family. Monomer.

The protein localises to the plastid. Its subcellular location is the chloroplast. It catalyses the reaction AMP + ATP = 2 ADP. Catalyzes the reversible transfer of the terminal phosphate group between ATP and AMP. This chain is Adenylate kinase 5, chloroplastic, found in Arabidopsis thaliana (Mouse-ear cress).